The primary structure comprises 888 residues: Alanine--tRNA ligase (888 aa).

4 residues coordinate Zn(2+): H571, H575, C674, and H678.

This sequence belongs to the class-II aminoacyl-tRNA synthetase family. Zn(2+) is required as a cofactor.

It localises to the cytoplasm. It carries out the reaction tRNA(Ala) + L-alanine + ATP = L-alanyl-tRNA(Ala) + AMP + diphosphate. Catalyzes the attachment of alanine to tRNA(Ala) in a two-step reaction: alanine is first activated by ATP to form Ala-AMP and then transferred to the acceptor end of tRNA(Ala). Also edits incorrectly charged Ser-tRNA(Ala) and Gly-tRNA(Ala) via its editing domain. The protein is Alanine--tRNA ligase of Nocardia farcinica (strain IFM 10152).